The primary structure comprises 155 residues: Reticulon-like protein B23 (155 aa).

A Reticulon domain is found at 1 to 155 (MGEMGKAIGL…LNRRNGEILD (155 aa)). The next 2 helical transmembrane spans lie at 30–50 (SLIS…GLLF) and 117–137 (IISG…SMLF).

It localises to the endoplasmic reticulum membrane. This is Reticulon-like protein B23 (RTNLB23) from Arabidopsis thaliana (Mouse-ear cress).